The sequence spans 161 residues: Myosin regulatory light chain A, smooth adductor muscle (161 aa).

A Blocked amino end (Ala) modification is found at alanine 1. EF-hand domains lie at 20-55 (KLMQ…LGRT) and 89-124 (DTEE…MGDN). Ca(2+) is bound by residues aspartate 33, asparagine 35, aspartate 37, and aspartate 44.

In molluscan muscle, calcium regulation is associated with myosin rather than with actin. Muscle myosin contains two types of light chains: the catalytic light chain, essential for ATPase activity, and the regulatory light chain, a calcium-binding protein responsible for Ca(2+) dependent binding and Ca(2+) dependent Mg-ATPase activity. The sequence is that of Myosin regulatory light chain A, smooth adductor muscle from Mizuhopecten yessoensis (Japanese scallop).